A 323-amino-acid polypeptide reads, in one-letter code: tRNA U34 carboxymethyltransferase (323 aa).

Residues K91, W105, K110, G130, 152 to 154, 181 to 182, M196, Y200, and R315 contribute to the carboxy-S-adenosyl-L-methionine site; these read DPT and IE.

The protein belongs to the class I-like SAM-binding methyltransferase superfamily. CmoB family. In terms of assembly, homotetramer.

The catalysed reaction is carboxy-S-adenosyl-L-methionine + 5-hydroxyuridine(34) in tRNA = 5-carboxymethoxyuridine(34) in tRNA + S-adenosyl-L-homocysteine + H(+). Catalyzes carboxymethyl transfer from carboxy-S-adenosyl-L-methionine (Cx-SAM) to 5-hydroxyuridine (ho5U) to form 5-carboxymethoxyuridine (cmo5U) at position 34 in tRNAs. This Escherichia fergusonii (strain ATCC 35469 / DSM 13698 / CCUG 18766 / IAM 14443 / JCM 21226 / LMG 7866 / NBRC 102419 / NCTC 12128 / CDC 0568-73) protein is tRNA U34 carboxymethyltransferase.